Here is a 261-residue protein sequence, read N- to C-terminus: tRNA pseudouridine synthase A (261 aa).

The Nucleophile role is filled by Asp-53. Residue Tyr-111 participates in substrate binding.

It belongs to the tRNA pseudouridine synthase TruA family. Homodimer.

It carries out the reaction uridine(38/39/40) in tRNA = pseudouridine(38/39/40) in tRNA. Functionally, formation of pseudouridine at positions 38, 39 and 40 in the anticodon stem and loop of transfer RNAs. The chain is tRNA pseudouridine synthase A from Shouchella clausii (strain KSM-K16) (Alkalihalobacillus clausii).